Here is a 746-residue protein sequence, read N- to C-terminus: Stromal interaction molecule 2 (746 aa).

The first 14 residues, 1–14, serve as a signal peptide directing secretion; sequence MLVLGLLVAGAADG. Topologically, residues 15 to 218 are extracellular; the sequence is CELVPRHLRG…RPPHNWMKDF (204 aa). The 36-residue stretch at 67–102 folds into the EF-hand domain; sequence FSLEALQTIHKQMDDDKDGGIEVEESDEFIREDMKY. D80, D82, D84, and E91 together coordinate Ca(2+). Residue N135 is glycosylated (N-linked (GlcNAc...) asparagine). Residues 136–204 enclose the SAM domain; the sequence is WTLEDTLQWL…QLKALDVVLF (69 aa). A helical membrane pass occupies residues 219–235; the sequence is ILTVSIVIGVGGCWFAY. Residues 236–746 are Cytoplasmic-facing; the sequence is TQNKTSKEHV…IKSLFKKKSK (511 aa). Residues 247–394 adopt a coiled-coil conformation; that stretch reads KMMKDLESLQ…EKIKKKRSTV (148 aa). Positions 483–562 are disordered; that stretch reads DLDEDTPPIV…SLPSPDPDIL (80 aa). At S523 the chain carries Phosphoserine. Positions 537–549 are enriched in basic residues; the sequence is HPSHPRHPHHPQH. Residues S609, S621, S640, S650, S661, S665, S680, and S697 each carry the phosphoserine modification. The tract at residues 685–746 is disordered; it reads SSGIPVPKPR…IKSLFKKKSK (62 aa). Over residues 723-732 the composition is skewed to basic and acidic residues; sequence DLCHNGEKSK. Basic residues predominate over residues 733-746; the sequence is KPSKIKSLFKKKSK.

Oligomer with STIM1. Interacts with ORAI1. Post-translationally, glycosylated. Phosphorylated predominantly on Ser residues. As to expression, expressed in all tissues and tumor cell lines examined.

The protein resides in the endoplasmic reticulum membrane. Its function is as follows. Plays a role in mediating store-operated Ca(2+) entry (SOCE), a Ca(2+) influx following depletion of intracellular Ca(2+) stores. Functions as a highly sensitive Ca(2+) sensor in the endoplasmic reticulum which activates both store-operated and store-independent Ca(2+)-influx. Regulates basal cytosolic and endoplasmic reticulum Ca(2+) concentrations. Upon mild variations of the endoplasmic reticulum Ca(2+) concentration, translocates from the endoplasmic reticulum to the plasma membrane where it probably activates the Ca(2+) release-activated Ca(2+) (CRAC) channels ORAI1, ORAI2 and ORAI3. May inhibit STIM1-mediated Ca(2+) influx. This chain is Stromal interaction molecule 2 (STIM2), found in Homo sapiens (Human).